A 2051-amino-acid chain; its full sequence is Autophagy-related protein 2 (2051 aa).

The 91-residue stretch at 31-121 folds into the Chorein N-terminal domain; it reads QALDLDNLNF…QDEQTAKNKK (91 aa). The span at 108-117 shows a compositional bias: basic and acidic residues; the sequence is SKQEQDEQTA. Disordered stretches follow at residues 108–129, 152–179, 297–331, 363–384, 419–466, and 501–564; these read SKQE…DGDE, RRLE…DDDG, SLVK…DMSI, DTQY…TPRA, RSEP…ADTE, and PGGW…DTST. Polar residues-rich tracts occupy residues 374–383 and 426–435; these read AGSSPLSTPR and PPTSFQPQTM. Over residues 436-454 the composition is skewed to low complexity; it reads PSGAVSPAPSEPSSSASSV.

This sequence belongs to the ATG2 family.

It is found in the preautophagosomal structure membrane. It localises to the endoplasmic reticulum membrane. It carries out the reaction a 1,2-diacyl-sn-glycero-3-phosphocholine(in) = a 1,2-diacyl-sn-glycero-3-phosphocholine(out). It catalyses the reaction a 1,2-diacyl-sn-glycero-3-phospho-L-serine(in) = a 1,2-diacyl-sn-glycero-3-phospho-L-serine(out). The enzyme catalyses a 1,2-diacyl-sn-glycero-3-phosphoethanolamine(in) = a 1,2-diacyl-sn-glycero-3-phosphoethanolamine(out). Its function is as follows. Lipid transfer protein required for autophagosome completion and peroxisome degradation. Tethers the edge of the isolation membrane (IM) to the endoplasmic reticulum (ER) and mediates direct lipid transfer from ER to IM for IM expansion. Atg-2 binds to the ER exit site (ERES), which is the membrane source for autophagosome formation, using basic residues in its N-terminal region (NR) and to the expanding edge of the IM through its C-terminal region. The latter binding is assisted by an atg-18-PtdIns3P interaction. Atg-2 then extracts phospholipids from the membrane source using its NR and transfers them to atg-9 to the IM through its predicted beta-sheet-rich structure for membrane expansion. The polypeptide is Autophagy-related protein 2 (apg-2) (Neurospora crassa (strain ATCC 24698 / 74-OR23-1A / CBS 708.71 / DSM 1257 / FGSC 987)).